We begin with the raw amino-acid sequence, 35 residues long: Conotoxin TxMEKL-0422 (35 aa).

A disordered region spans residues 1 to 35; it reads NPASCCSCADVDPGRASRKTPKGEDQVFIKEKDRC. Basic and acidic residues predominate over residues 21 to 35; sequence PKGEDQVFIKEKDRC.

Post-translationally, contains disulfide bonds. Expressed by the venom duct.

Its subcellular location is the secreted. This chain is Conotoxin TxMEKL-0422, found in Conus textile (Cloth-of-gold cone).